The primary structure comprises 227 residues: MMVAHTAQQLDLREKLLTNGVHSLSDIELLAIFISSGNNRKSCLQLAYELTKHLGNLRNILNADLQSFKSIHGLGEVRYAQLQAAKEICHRSDFIDLQKEIRLSNTQQTYAFLKKRLRDYKNETFAALFLDNQHRIIAYEELFSGTINTATVYPRPIVERVLQLNAAALILAHNHPSGLSDASQQDLAITERIRDALDLVDARLLDHIVIGDNEVYSIFAENKWVCN.

The MPN domain occupies 102 to 225; the sequence is RLSNTQQTYA…YSIFAENKWV (124 aa). Zn(2+)-binding residues include H173, H175, and D186. Residues 173-186 carry the JAMM motif motif; that stretch reads HNHPSGLSDASQQD.

It belongs to the UPF0758 family.

The polypeptide is UPF0758 protein lpp2553 (Legionella pneumophila (strain Paris)).